A 260-amino-acid polypeptide reads, in one-letter code: Ribosomal RNA small subunit methyltransferase G (260 aa).

Residues 1–45 (MKQRGPAGGRSSSPKPSAPGSGAGEGPDGRSAPASQKINKASAND) form a disordered region. Positions 9-20 (GRSSSPKPSAPG) are enriched in low complexity. Over residues 33–45 (PASQKINKASAND) the composition is skewed to polar residues. S-adenosyl-L-methionine is bound by residues Gly-123, Phe-128, and Arg-193.

Belongs to the methyltransferase superfamily. RNA methyltransferase RsmG family.

The protein localises to the cytoplasm. The enzyme catalyses guanosine(527) in 16S rRNA + S-adenosyl-L-methionine = N(7)-methylguanosine(527) in 16S rRNA + S-adenosyl-L-homocysteine. In terms of biological role, specifically methylates the N7 position of guanine in position 527 of 16S rRNA. This chain is Ribosomal RNA small subunit methyltransferase G, found in Bradyrhizobium diazoefficiens (strain JCM 10833 / BCRC 13528 / IAM 13628 / NBRC 14792 / USDA 110).